The chain runs to 338 residues: DNA-directed RNA polymerase subunit alpha (338 aa).

The interval M1 to N226 is alpha N-terminal domain (alpha-NTD). An alpha C-terminal domain (alpha-CTD) region spans residues L243 to Y338.

It belongs to the RNA polymerase alpha chain family. As to quaternary structure, homodimer. The RNAP catalytic core consists of 2 alpha, 1 beta, 1 beta' and 1 omega subunit. When a sigma factor is associated with the core the holoenzyme is formed, which can initiate transcription.

The enzyme catalyses RNA(n) + a ribonucleoside 5'-triphosphate = RNA(n+1) + diphosphate. Functionally, DNA-dependent RNA polymerase catalyzes the transcription of DNA into RNA using the four ribonucleoside triphosphates as substrates. The sequence is that of DNA-directed RNA polymerase subunit alpha from Streptomyces avermitilis (strain ATCC 31267 / DSM 46492 / JCM 5070 / NBRC 14893 / NCIMB 12804 / NRRL 8165 / MA-4680).